A 284-amino-acid chain; its full sequence is Ribosomal RNA small subunit methyltransferase A (284 aa).

Residues Asn-27, Leu-29, Gly-54, Glu-75, Asp-100, and Asn-125 each coordinate S-adenosyl-L-methionine.

The protein belongs to the class I-like SAM-binding methyltransferase superfamily. rRNA adenine N(6)-methyltransferase family. RsmA subfamily.

The protein localises to the cytoplasm. The enzyme catalyses adenosine(1518)/adenosine(1519) in 16S rRNA + 4 S-adenosyl-L-methionine = N(6)-dimethyladenosine(1518)/N(6)-dimethyladenosine(1519) in 16S rRNA + 4 S-adenosyl-L-homocysteine + 4 H(+). Functionally, specifically dimethylates two adjacent adenosines (A1518 and A1519) in the loop of a conserved hairpin near the 3'-end of 16S rRNA in the 30S particle. May play a critical role in biogenesis of 30S subunits. This is Ribosomal RNA small subunit methyltransferase A from Protochlamydia amoebophila (strain UWE25).